We begin with the raw amino-acid sequence, 486 residues long: Phosphomethylpyrimidine synthase (486 aa).

Substrate contacts are provided by residues Asn-80, Met-109, Tyr-139, His-175, 195–197 (SRG), 236–239 (DSLR), and Glu-275. Position 279 (His-279) interacts with Zn(2+). Substrate is bound at residue Tyr-329. His-370 contacts Zn(2+). The [4Fe-4S] cluster site is built by Cys-450, Cys-453, and Cys-458.

Belongs to the ThiC family. It depends on [4Fe-4S] cluster as a cofactor.

The catalysed reaction is 5-amino-1-(5-phospho-beta-D-ribosyl)imidazole + S-adenosyl-L-methionine = 4-amino-2-methyl-5-(phosphooxymethyl)pyrimidine + CO + 5'-deoxyadenosine + formate + L-methionine + 3 H(+). It participates in cofactor biosynthesis; thiamine diphosphate biosynthesis. Its function is as follows. Catalyzes the synthesis of the hydroxymethylpyrimidine phosphate (HMP-P) moiety of thiamine from aminoimidazole ribotide (AIR) in a radical S-adenosyl-L-methionine (SAM)-dependent reaction. The chain is Phosphomethylpyrimidine synthase from Trichodesmium erythraeum (strain IMS101).